A 338-amino-acid chain; its full sequence is Ketoreductase azaE (338 aa).

NADP(+)-binding residues include K41 and Y166.

The protein belongs to the NAD(P)-dependent epimerase/dehydratase family. Dihydroflavonol-4-reductase subfamily.

It participates in secondary metabolite biosynthesis. Ketoreductase; part of the gene cluster that mediates the biosynthesis of azaphilones, a class of fungal metabolites characterized by a highly oxygenated pyrano-quinone bicyclic core and exhibiting a broad range of bioactivities. In the first step, the non-reducing polyketide synthase azaA forms the hexaketide precursor from successive condensations of five malonyl-CoA units, presumably with a simple acetyl-CoA starter unit. The reactive polyketide chain then undergoes a PT-mediated C2-C7 cyclization to afford the aromatic ring and is eventually released as an aldehyde through the R-domain. The putative ketoreductase azaE is proposed to catalyze the reduction of the terminal ketone resulting in the early culture product FK17-P2a. The monooxygenase azaH was demonstrated to be the only enzyme required to convert FK17-P2a to azanigerone E. AzaH first hydroxylates the benzaldehyde intermediate FK17-P2a at C4, which triggers the formation of the pyran-ring to afford azanigerone E. In parallel, the 2,4-dimethylhexanoyl chain is synthesized by the HR-PKS azaB and is proposed to be transferred to the C4-hydroxyl of azanigerone E by the acyltransferase azaD directly from the ACP domain of azaB. Alternatively, the 2,4-dimethyl-hexanoyl chain may be offloaded from the HR-PKS as a carboxylic acid and converted to an acyl-CoA by azaF. The resulting acyl-CoA molecule could then be taken up as a substrate by AzaD to form azanigerone B. To yield the carboxylic acid substituent in azanigerone A, the hydroxypropyl side chain of azanigerone B would need to undergo a C-C oxidative cleavage catalyzed by cytochrome P450 AzaI. AzaI is proposed to act on a vicinal diol that leads to a C-C bond scission either through an alkoxyradical intermediate or a peroxy complex. In the biosynthesis of azanigerone A, azanigerone B first undergoes hydroxylation at C10, possibly catalyzed by one of the two FAD-dependent monooxygenases encoded in the cluster, azaG or azaL, resulting in the vicinal diol azanigerone C. Oxidative cleavage of azanigerone C by azaI would yield the corresponding aldehyde derivative of azanigerone A. Finally, the dehydrogenase azaJ is proposed to convert the aldehyde functional group into the carboxylic acid, completing the conversion from azanigerone B to azanigerone A. Alternatively, the oxidation of aldehyde to carboxylic acid may be catalyzed by the same P450 enzyme azaI via consecutive oxidation or by endogenous alcohol dehydrogenase. The chain is Ketoreductase azaE from Aspergillus niger (strain ATCC 1015 / CBS 113.46 / FGSC A1144 / LSHB Ac4 / NCTC 3858a / NRRL 328 / USDA 3528.7).